The primary structure comprises 1592 residues: Probable serine/threonine-protein kinase DDB_G0293958 (1592 aa).

The Protein kinase 1 domain maps to 1-302; the sequence is MTGFEIFKKK…CLNYLKEKLI (302 aa). ATP is bound by residues 2–10 and lysine 43; that span reads TGFEIFKKK. The Proton acceptor role is filled by aspartate 158. Disordered regions lie at residues 348-402, 455-526, and 837-867; these read INNN…NNNN, FNDI…SNYN, and KNNN…NDKS. Positions 349 to 402 are enriched in low complexity; the sequence is NNNNNNNNNNNNNNNNNNNNNNNNNNNNNNNNNNNNNNNNNNNNNNNNNNNNNN. Residues 461–518 are a coiled coil; it reads STTGEEEEEEKKDNLKRQNENNQIEQEDKGEKHLKETLNNNNNNNNNNNNNNNNNNNN. Over residues 486-496 the composition is skewed to basic and acidic residues; that stretch reads QEDKGEKHLKE. Composition is skewed to low complexity over residues 499 to 526 and 837 to 864; these read NNNN…SNYN and KNNN…NNSN. Residues 1342–1592 enclose the Protein kinase 2 domain; sequence LGTYNLIGDS…KELIECLNKL (251 aa). ATP-binding positions include 1348–1356 and lysine 1376; that span reads IGDSVFRNI. Aspartate 1474 (proton acceptor) is an active-site residue.

This sequence belongs to the protein kinase superfamily. Ser/Thr protein kinase family.

The catalysed reaction is L-seryl-[protein] + ATP = O-phospho-L-seryl-[protein] + ADP + H(+). The enzyme catalyses L-threonyl-[protein] + ATP = O-phospho-L-threonyl-[protein] + ADP + H(+). This Dictyostelium discoideum (Social amoeba) protein is Probable serine/threonine-protein kinase DDB_G0293958.